We begin with the raw amino-acid sequence, 176 residues long: Caltractin (176 aa).

Residues 1–27 (MNRAAIAAGKPSGSISTGKPRRKTRAE) form a disordered region. 4 EF-hand domains span residues 31-66 (EMKHEIREAFDLFDADRSGRIDFHELKVAMRALGFD), 67-102 (VKKEEIQRIMNEYDRDQLGEITFQDFEEVMIEKISN), 104-139 (DPTEEILKAFRLFDDDATGRISLKNLRRVAKELSEN), and 140-175 (ISDEELLAMIQEFDRDGDGEIDEEDFIAILRSTSAF). 5 residues coordinate Ca(2+): Asp-44, Asp-46, Ser-48, Arg-50, and Glu-55. The Ca(2+) site is built by Asp-153, Asp-155, Asp-157, Glu-159, and Asp-164.

Belongs to the centrin family. In terms of assembly, monomer.

Its subcellular location is the cytoplasm. The protein resides in the cytoskeleton. It localises to the microtubule organizing center. It is found in the centrosome. In terms of biological role, plays a fundamental role in microtubule-organizing center structure and function. The chain is Caltractin (CAL) from Giardia intestinalis (Giardia lamblia).